A 94-amino-acid chain; its full sequence is HssA/B-like protein 51 (94 aa).

Positions 1–25 (MTLFSSISSISNPMTNSKSRISSFG) are disordered.

It belongs to the hssA/B family.

In Dictyostelium discoideum (Social amoeba), this protein is HssA/B-like protein 51 (hssl51).